The sequence spans 382 residues: MRYLTAGESHGPKLVGILEGVPSGAKIDKETIDQALQERQKGPGRGGRMKIEKDQVTILSGVRGGLTTGAPIALEIINRDWANWEKIMAWGDEADLESRKVITPRPGHADLTGHLKYRTEVRNVLERASARETAMRVAIGNIAVQILEALGVEIRGQVLSVGKVHMNSEDTPEYWQRVQASEWKVGDPQGEEALYTQLQEARSKGESLGGVLQIQVQNLLPGLGSYVQWDRKLDGRLAQAVLSVQAIKGVAFGMGFAAGQHFGSEVHDPIGYDSGRGYYRYSNNAGGIEGGMTNGEPVIIEAVMKPIPTLYSPLSTVNLETKEVMEASVERSDVCAVPAALVVLKHVAAWEILQAILEKFPADTWDELDKAWHDYKRFVSER.

Positions 39 and 45 each coordinate NADP(+). Residues 127–129 (RAS), 245–246 (QA), glycine 290, 305–309 (KPIPT), and arginine 331 each bind FMN.

Belongs to the chorismate synthase family. As to quaternary structure, homotetramer. FMNH2 serves as cofactor.

The catalysed reaction is 5-O-(1-carboxyvinyl)-3-phosphoshikimate = chorismate + phosphate. It functions in the pathway metabolic intermediate biosynthesis; chorismate biosynthesis; chorismate from D-erythrose 4-phosphate and phosphoenolpyruvate: step 7/7. Functionally, catalyzes the anti-1,4-elimination of the C-3 phosphate and the C-6 proR hydrogen from 5-enolpyruvylshikimate-3-phosphate (EPSP) to yield chorismate, which is the branch point compound that serves as the starting substrate for the three terminal pathways of aromatic amino acid biosynthesis. This reaction introduces a second double bond into the aromatic ring system. In Desulfitobacterium hafniense (strain Y51), this protein is Chorismate synthase.